Reading from the N-terminus, the 149-residue chain is Sex-regulated protein janus-A (149 aa).

Substrate is bound at residue lysine 46. Catalysis depends on histidine 77, which acts as the Proton acceptor. Residue 118-120 coordinates substrate; that stretch reads STG.

The protein belongs to the janus family.

Functionally, janA and janB regulate somatic sex differentiation. The protein is Sex-regulated protein janus-A (janA) of Drosophila pseudoobscura pseudoobscura (Fruit fly).